Consider the following 84-residue polypeptide: Alpha-mammal toxin Ts2 (84 aa).

Positions Met-1 to Gly-20 are cleaved as a signal peptide. Residues Lys-21–Gly-83 enclose the LCN-type CS-alpha/beta domain. Cystine bridges form between Cys-31–Cys-82, Cys-35–Cys-58, Cys-43–Cys-63, and Cys-47–Cys-65. Cysteine amide is present on Cys-82.

Belongs to the long (4 C-C) scorpion toxin superfamily. Sodium channel inhibitor family. Beta subfamily. In terms of tissue distribution, expressed by the venom gland.

It is found in the secreted. Functionally, alpha toxins bind voltage-independently at site-3 of sodium channels (Nav) and inhibit the inactivation of the activated channels, thereby blocking neuronal transmission. This toxin acts on Nav1.2/SCN2A, Nav1.3/SCN3A, Nav1.5/SCN5A, Nav1.6/SCN8A and Nav1.7/SCN9A voltage-gated sodium channels, with the highest affinity for Nav1.3/SCN3A, followed by Nav1.6/SCN8A and Nav1.7/SCN9A which are affected almost equally. Interestingly, shows a significant shift of the voltage dependence of activation for Nav1.3/SCN3A that is characteristic of beta-toxins. In addition, in presence of LPS, this toxin inhibits the release of NO, IL-6 and TNF-alpha in J774.1 cells. Further, in the absence of LPS, it stimulates the production of the anti-inflammatory cytokine IL-10. This toxin is active on mammals. This is Alpha-mammal toxin Ts2 from Tityus serrulatus (Brazilian scorpion).